The chain runs to 122 residues: Large ribosomal subunit protein uL14 (122 aa).

Belongs to the universal ribosomal protein uL14 family. In terms of assembly, part of the 50S ribosomal subunit. Forms a cluster with proteins L3 and L19. In the 70S ribosome, L14 and L19 interact and together make contacts with the 16S rRNA in bridges B5 and B8.

In terms of biological role, binds to 23S rRNA. Forms part of two intersubunit bridges in the 70S ribosome. The chain is Large ribosomal subunit protein uL14 from Synechococcus sp. (strain JA-2-3B'a(2-13)) (Cyanobacteria bacterium Yellowstone B-Prime).